The chain runs to 380 residues: Autophagy protein 5 (380 aa).

Residue lysine 138 forms a Glycyl lysine isopeptide (Lys-Gly) (interchain with G-Cter in ATG12) linkage. A compositionally biased stretch (polar residues) spans threonine 194 to serine 203. Disordered regions lie at residues threonine 194 to proline 214 and arginine 283 to serine 309.

It belongs to the ATG5 family. Conjugated to ATG12. Post-translationally, conjugated to ATG12; which is essential for autophagy.

Its subcellular location is the cytoplasm. Required for autophagy. Conjugation to ATG12 is essential for plant nutrient recycling. The polypeptide is Autophagy protein 5 (ATG5) (Oryza sativa subsp. japonica (Rice)).